A 113-amino-acid polypeptide reads, in one-letter code: MHEMSLCEGIRGIVEDQARRHGFSRVTRMRLEIGRFAGVEKAALSFAFDVVMRGSPAEGAVLEMIDLPGRAMCFDCAEQVELDDRLSPCPLCGGGRLMPETGDEMRIRDMEVI.

His-2 provides a ligand contact to Ni(2+). 4 residues coordinate Zn(2+): Cys-73, Cys-76, Cys-89, and Cys-92.

Belongs to the HypA/HybF family.

Involved in the maturation of [NiFe] hydrogenases. Required for nickel insertion into the metal center of the hydrogenase. The protein is Hydrogenase maturation factor HypA of Paracoccus denitrificans (strain Pd 1222).